The chain runs to 190 residues: Segregation and condensation protein B (190 aa).

It belongs to the ScpB family. In terms of assembly, homodimer. Homodimerization may be required to stabilize the binding of ScpA to the Smc head domains. Component of a cohesin-like complex composed of ScpA, ScpB and the Smc homodimer, in which ScpA and ScpB bind to the head domain of Smc. The presence of the three proteins is required for the association of the complex with DNA.

Its subcellular location is the cytoplasm. Participates in chromosomal partition during cell division. May act via the formation of a condensin-like complex containing Smc and ScpA that pull DNA away from mid-cell into both cell halves. The chain is Segregation and condensation protein B from Bacillus cereus (strain G9842).